Here is a 633-residue protein sequence, read N- to C-terminus: Chaperone protein DnaK (633 aa).

At threonine 196 the chain carries Phosphothreonine; by autocatalysis. Residues 594–633 (NLYGQPGAEPQPETNGHAGGSKGGDGAVNAEYEVIDGDDK) are disordered. The span at 610–619 (HAGGSKGGDG) shows a compositional bias: gly residues.

This sequence belongs to the heat shock protein 70 family.

Acts as a chaperone. The chain is Chaperone protein DnaK from Chlorobaculum tepidum (strain ATCC 49652 / DSM 12025 / NBRC 103806 / TLS) (Chlorobium tepidum).